A 166-amino-acid chain; its full sequence is Lithostathine-1-alpha (166 aa).

The first 22 residues, 1–22 (MAQTSSYFMLISCLMFLSQSQG), serve as a signal peptide directing secretion. Gln-23 carries the post-translational modification Pyrrolidone carboxylic acid. O-linked (GalNAc) threonine glycosylation is present at Thr-27. The C-type lectin domain maps to 34–164 (ISCPEGTNAY…EDKFSFVCKF (131 aa)). Cystine bridges form between Cys-36/Cys-47, Cys-64/Cys-162, and Cys-137/Cys-154.

The composition of the O-linked carbohydrate on Thr-27 is complex and varied. In the crystallographic structure, the attached sugar appears to be N-acetylglucosamine, typical of an intracellular protein, rather than N-acetylgalactosamine. In pancreatic acinar cells and, in lower levels, in brain. Enhanced expression of PSP-related transcripts and intraneuronal accumulation of PSP-like proteins is found in brain from Alzheimer disease and Down syndrome patients.

The protein resides in the secreted. Its function is as follows. Might act as an inhibitor of spontaneous calcium carbonate precipitation. May be associated with neuronal sprouting in brain, and with brain and pancreas regeneration. The protein is Lithostathine-1-alpha (REG1A) of Homo sapiens (Human).